The following is a 386-amino-acid chain: Histidinol-phosphate aminotransferase (386 aa).

Polar residues predominate over residues 1–11 (MMVRKSTASNR). The segment at 1-22 (MMVRKSTASNRRLQDKGDEEPV) is disordered. An N6-(pyridoxal phosphate)lysine modification is found at K248.

The protein belongs to the class-II pyridoxal-phosphate-dependent aminotransferase family. Histidinol-phosphate aminotransferase subfamily. In terms of assembly, homodimer. Pyridoxal 5'-phosphate serves as cofactor.

The catalysed reaction is L-histidinol phosphate + 2-oxoglutarate = 3-(imidazol-4-yl)-2-oxopropyl phosphate + L-glutamate. Its pathway is amino-acid biosynthesis; L-histidine biosynthesis; L-histidine from 5-phospho-alpha-D-ribose 1-diphosphate: step 7/9. This chain is Histidinol-phosphate aminotransferase, found in Moorella thermoacetica (strain ATCC 39073 / JCM 9320).